The following is a 384-amino-acid chain: Probable protein phosphatase 2C 48 (384 aa).

Residues 47–358 (ITGEFSMAVV…DDITVIVVFL (312 aa)) form the PPM-type phosphatase domain. Ser78 carries the phosphoserine modification. Residues Asp89, Gly90, Asp290, and Asp349 each contribute to the Mn(2+) site.

It belongs to the PP2C family. Requires Mg(2+) as cofactor. It depends on Mn(2+) as a cofactor.

The catalysed reaction is O-phospho-L-seryl-[protein] + H2O = L-seryl-[protein] + phosphate. The enzyme catalyses O-phospho-L-threonyl-[protein] + H2O = L-threonyl-[protein] + phosphate. In terms of biological role, may dephosphorylate and repress plasma membrane H(+)-ATPases (PM H(+)-ATPases, e.g. AHA1 and AHA2), thus influencing negatively plant growth and fitness. The protein is Probable protein phosphatase 2C 48 of Arabidopsis thaliana (Mouse-ear cress).